The following is a 188-amino-acid chain: Probable nicotinate-nucleotide adenylyltransferase (188 aa).

This sequence belongs to the NadD family.

The enzyme catalyses nicotinate beta-D-ribonucleotide + ATP + H(+) = deamido-NAD(+) + diphosphate. It participates in cofactor biosynthesis; NAD(+) biosynthesis; deamido-NAD(+) from nicotinate D-ribonucleotide: step 1/1. Its function is as follows. Catalyzes the reversible adenylation of nicotinate mononucleotide (NaMN) to nicotinic acid adenine dinucleotide (NaAD). The polypeptide is Probable nicotinate-nucleotide adenylyltransferase (Listeria monocytogenes serotype 4a (strain HCC23)).